The primary structure comprises 153 residues: Large ribosomal subunit protein uL13 (153 aa).

The disordered stretch occupies residues 128–153; sequence SEHPHEAQSPEVLDVTSMNSKNTRSA. Polar residues predominate over residues 143–153; sequence TSMNSKNTRSA.

Belongs to the universal ribosomal protein uL13 family. In terms of assembly, part of the 50S ribosomal subunit.

In terms of biological role, this protein is one of the early assembly proteins of the 50S ribosomal subunit, although it is not seen to bind rRNA by itself. It is important during the early stages of 50S assembly. This chain is Large ribosomal subunit protein uL13, found in Roseobacter denitrificans (strain ATCC 33942 / OCh 114) (Erythrobacter sp. (strain OCh 114)).